The following is a 100-amino-acid chain: Small ribosomal subunit protein uS14c (100 aa).

It belongs to the universal ribosomal protein uS14 family. As to quaternary structure, part of the 30S ribosomal subunit.

It is found in the plastid. The protein localises to the chloroplast. Functionally, binds 16S rRNA, required for the assembly of 30S particles. In Cucumis sativus (Cucumber), this protein is Small ribosomal subunit protein uS14c.